The chain runs to 87 residues: Cell division topological specificity factor (87 aa).

Belongs to the MinE family.

Prevents the cell division inhibition by proteins MinC and MinD at internal division sites while permitting inhibition at polar sites. This ensures cell division at the proper site by restricting the formation of a division septum at the midpoint of the long axis of the cell. This is Cell division topological specificity factor from Delftia acidovorans (strain DSM 14801 / SPH-1).